A 194-amino-acid chain; its full sequence is Peptidyl-tRNA hydrolase (194 aa).

A tRNA-binding site is contributed by Y17. H22 functions as the Proton acceptor in the catalytic mechanism. TRNA-binding residues include F68, N70, and N116.

Belongs to the PTH family. In terms of assembly, monomer.

The protein localises to the cytoplasm. It catalyses the reaction an N-acyl-L-alpha-aminoacyl-tRNA + H2O = an N-acyl-L-amino acid + a tRNA + H(+). In terms of biological role, hydrolyzes ribosome-free peptidyl-tRNAs (with 1 or more amino acids incorporated), which drop off the ribosome during protein synthesis, or as a result of ribosome stalling. Catalyzes the release of premature peptidyl moieties from peptidyl-tRNA molecules trapped in stalled 50S ribosomal subunits, and thus maintains levels of free tRNAs and 50S ribosomes. The protein is Peptidyl-tRNA hydrolase of Shewanella sediminis (strain HAW-EB3).